A 258-amino-acid chain; its full sequence is Imidazole glycerol phosphate synthase subunit HisF (258 aa).

Catalysis depends on residues Asp11 and Asp130.

This sequence belongs to the HisA/HisF family. As to quaternary structure, heterodimer of HisH and HisF.

Its subcellular location is the cytoplasm. It catalyses the reaction 5-[(5-phospho-1-deoxy-D-ribulos-1-ylimino)methylamino]-1-(5-phospho-beta-D-ribosyl)imidazole-4-carboxamide + L-glutamine = D-erythro-1-(imidazol-4-yl)glycerol 3-phosphate + 5-amino-1-(5-phospho-beta-D-ribosyl)imidazole-4-carboxamide + L-glutamate + H(+). Its pathway is amino-acid biosynthesis; L-histidine biosynthesis; L-histidine from 5-phospho-alpha-D-ribose 1-diphosphate: step 5/9. Its function is as follows. IGPS catalyzes the conversion of PRFAR and glutamine to IGP, AICAR and glutamate. The HisF subunit catalyzes the cyclization activity that produces IGP and AICAR from PRFAR using the ammonia provided by the HisH subunit. This chain is Imidazole glycerol phosphate synthase subunit HisF, found in Xanthomonas campestris pv. campestris (strain B100).